A 127-amino-acid chain; its full sequence is Large ribosomal subunit protein bL17 (127 aa).

It belongs to the bacterial ribosomal protein bL17 family. In terms of assembly, part of the 50S ribosomal subunit. Contacts protein L32.

This chain is Large ribosomal subunit protein bL17, found in Leuconostoc citreum (strain KM20).